Here is a 128-residue protein sequence, read N- to C-terminus: Large ribosomal subunit protein bL12 (128 aa).

The protein belongs to the bacterial ribosomal protein bL12 family. In terms of assembly, homodimer. Part of the ribosomal stalk of the 50S ribosomal subunit. Forms a multimeric L10(L12)X complex, where L10 forms an elongated spine to which 2 to 4 L12 dimers bind in a sequential fashion. Binds GTP-bound translation factors.

Forms part of the ribosomal stalk which helps the ribosome interact with GTP-bound translation factors. Is thus essential for accurate translation. The protein is Large ribosomal subunit protein bL12 of Corynebacterium aurimucosum (strain ATCC 700975 / DSM 44827 / CIP 107346 / CN-1) (Corynebacterium nigricans).